Consider the following 432-residue polypeptide: Adenylosuccinate synthetase (432 aa).

GTP-binding positions include 13–19 (GDEGKGK) and 41–43 (GHT). The active-site Proton acceptor is the D14. D14 and G41 together coordinate Mg(2+). Residues 14 to 17 (DEGK), 39 to 42 (NAGH), T130, R144, Q225, T240, and R304 contribute to the IMP site. The active-site Proton donor is the H42. 300–306 (ATTGRRR) lines the substrate pocket. Residues R306, 332 to 334 (KLD), and 415 to 417 (STG) contribute to the GTP site.

It belongs to the adenylosuccinate synthetase family. In terms of assembly, homodimer. Mg(2+) serves as cofactor.

It localises to the cytoplasm. It catalyses the reaction IMP + L-aspartate + GTP = N(6)-(1,2-dicarboxyethyl)-AMP + GDP + phosphate + 2 H(+). It functions in the pathway purine metabolism; AMP biosynthesis via de novo pathway; AMP from IMP: step 1/2. Its function is as follows. Plays an important role in the de novo pathway of purine nucleotide biosynthesis. Catalyzes the first committed step in the biosynthesis of AMP from IMP. The protein is Adenylosuccinate synthetase of Baumannia cicadellinicola subsp. Homalodisca coagulata.